The sequence spans 125 residues: Protein ApaG (125 aa).

In terms of domain architecture, ApaG spans 1–125; sequence MINAPRVCVQ…FRLAIPSLIH (125 aa).

This Pectobacterium atrosepticum (strain SCRI 1043 / ATCC BAA-672) (Erwinia carotovora subsp. atroseptica) protein is Protein ApaG.